The chain runs to 67 residues: Small ribosomal subunit protein eS31 (67 aa).

Zn(2+)-binding residues include C31, C34, C49, and C52. The C4-type zinc-finger motif lies at C31–C52.

The protein belongs to the eukaryotic ribosomal protein eS31 family. As to quaternary structure, part of the 30S ribosomal subunit. Zn(2+) serves as cofactor.

This chain is Small ribosomal subunit protein eS31, found in Methanococcus maripaludis (strain C6 / ATCC BAA-1332).